The following is a 244-amino-acid chain: rRNA adenine N-6-methyltransferase (244 aa).

Residues Asn11, Ile13, Gly38, Glu59, Asp84, and Ser101 each contribute to the S-adenosyl-L-methionine site.

This sequence belongs to the class I-like SAM-binding methyltransferase superfamily. rRNA adenine N(6)-methyltransferase family.

Involved in erythromycin resistance. This is rRNA adenine N-6-methyltransferase (ermG) from Lysinibacillus sphaericus (Bacillus sphaericus).